The chain runs to 314 residues: Acetyl-coenzyme A carboxylase carboxyl transferase subunit alpha (314 aa).

The CoA carboxyltransferase C-terminal domain occupies 32-289 (EIDMLEASLE…KSAFVAQLDS (258 aa)).

It belongs to the AccA family. Acetyl-CoA carboxylase is a heterohexamer composed of biotin carboxyl carrier protein (AccB), biotin carboxylase (AccC) and two subunits each of ACCase subunit alpha (AccA) and ACCase subunit beta (AccD).

The protein resides in the cytoplasm. It carries out the reaction N(6)-carboxybiotinyl-L-lysyl-[protein] + acetyl-CoA = N(6)-biotinyl-L-lysyl-[protein] + malonyl-CoA. Its pathway is lipid metabolism; malonyl-CoA biosynthesis; malonyl-CoA from acetyl-CoA: step 1/1. In terms of biological role, component of the acetyl coenzyme A carboxylase (ACC) complex. First, biotin carboxylase catalyzes the carboxylation of biotin on its carrier protein (BCCP) and then the CO(2) group is transferred by the carboxyltransferase to acetyl-CoA to form malonyl-CoA. The protein is Acetyl-coenzyme A carboxylase carboxyl transferase subunit alpha of Staphylococcus aureus (strain NCTC 8325 / PS 47).